Here is a 479-residue protein sequence, read N- to C-terminus: Glutamate--tRNA ligase (479 aa).

Residues 9–19 carry the 'HIGH' region motif; sequence PSPTGLFHIGT. Positions 248 to 252 match the 'KMSKS' region motif; sequence KLSKR. Residue K251 coordinates ATP.

The protein belongs to the class-I aminoacyl-tRNA synthetase family. Glutamate--tRNA ligase type 1 subfamily. Monomer.

The protein localises to the cytoplasm. The catalysed reaction is tRNA(Glu) + L-glutamate + ATP = L-glutamyl-tRNA(Glu) + AMP + diphosphate. Functionally, catalyzes the attachment of glutamate to tRNA(Glu) in a two-step reaction: glutamate is first activated by ATP to form Glu-AMP and then transferred to the acceptor end of tRNA(Glu). The polypeptide is Glutamate--tRNA ligase (Prochlorococcus marinus (strain MIT 9312)).